Consider the following 345-residue polypeptide: Beta-2-glycoprotein 1 (345 aa).

A signal peptide spans 1–19 (MISPVLILFSSFLCHVAIA). Sushi domains lie at 21–81 (RTCP…KCTP), 82–139 (RVCP…VCAP), 140–202 (ITCP…ECRE), and 203–262 (VKCP…SCKA). Cystine bridges form between C23–C66, C51–C79, C84–C124, C110–C137, C142–C188, C174–C200, C205–C248, C234–C260, C264–C315, C300–C325, and C307–C345. The O-linked (GalNAc...) threonine glycan is linked to T33. T149 carries O-linked (GalNAc...) threonine glycosylation. Residues N162, N183, and N193 are each glycosylated (N-linked (GlcNAc...) asparagine). The N-linked (GlcNAc...) asparagine glycan is linked to N253. The interval 263–345 (SCKVPVKKAT…KTDASDVKPC (83 aa)) is sushi-like.

As to expression, expressed by the liver and secreted in plasma.

Its subcellular location is the secreted. Binds to various kinds of negatively charged substances such as heparin, phospholipids, and dextran sulfate. May prevent activation of the intrinsic blood coagulation cascade by binding to phospholipids on the surface of damaged cells. In Pan troglodytes (Chimpanzee), this protein is Beta-2-glycoprotein 1 (APOH).